We begin with the raw amino-acid sequence, 410 residues long: Multifunctional CCA protein (410 aa).

ATP-binding residues include Gly8 and Arg11. Residues Gly8 and Arg11 each coordinate CTP. 2 residues coordinate Mg(2+): Asp21 and Asp23. The ATP site is built by Arg91, Arg137, and Arg140. Positions 91, 137, and 140 each coordinate CTP. An HD domain is found at 225 to 326 (SGIHTLMTLQ…LNVLKKTDAF (102 aa)).

Belongs to the tRNA nucleotidyltransferase/poly(A) polymerase family. Bacterial CCA-adding enzyme type 1 subfamily. In terms of assembly, monomer. Can also form homodimers and oligomers. It depends on Mg(2+) as a cofactor. Requires Ni(2+) as cofactor.

The enzyme catalyses a tRNA precursor + 2 CTP + ATP = a tRNA with a 3' CCA end + 3 diphosphate. It carries out the reaction a tRNA with a 3' CCA end + 2 CTP + ATP = a tRNA with a 3' CCACCA end + 3 diphosphate. Its function is as follows. Catalyzes the addition and repair of the essential 3'-terminal CCA sequence in tRNAs without using a nucleic acid template. Adds these three nucleotides in the order of C, C, and A to the tRNA nucleotide-73, using CTP and ATP as substrates and producing inorganic pyrophosphate. tRNA 3'-terminal CCA addition is required both for tRNA processing and repair. Also involved in tRNA surveillance by mediating tandem CCA addition to generate a CCACCA at the 3' terminus of unstable tRNAs. While stable tRNAs receive only 3'-terminal CCA, unstable tRNAs are marked with CCACCA and rapidly degraded. In Neisseria gonorrhoeae (strain ATCC 700825 / FA 1090), this protein is Multifunctional CCA protein.